Consider the following 531-residue polypeptide: Type 2 DNA topoisomerase 6 subunit B (531 aa).

Residues N42, D76, 97–98 (SK), 106–113 (GMYGLGVK), and K427 contribute to the ATP site.

It belongs to the TOP6B family. As to quaternary structure, homodimer. Heterotetramer of two Top6A and two Top6B chains.

The catalysed reaction is ATP-dependent breakage, passage and rejoining of double-stranded DNA.. In terms of biological role, relaxes both positive and negative superturns and exhibits a strong decatenase activity. This Metallosphaera sedula (strain ATCC 51363 / DSM 5348 / JCM 9185 / NBRC 15509 / TH2) protein is Type 2 DNA topoisomerase 6 subunit B.